A 560-amino-acid polypeptide reads, in one-letter code: Membrane protein insertase YidC (560 aa).

The next 6 helical transmembrane spans lie at 5 to 25 (IINLIAAIVLSLSIIFGWQYF), 334 to 354 (AIDFGWFYIITKPVFYAMNFF), 357 to 377 (YVGNFGVSILIVTVIIKLLMF), 431 to 451 (LPILVQIPVFFSIYKVLYVTI), 476 to 496 (LFGLLPFSPPSFLMIGAWPIL), and 522 to 542 (FMPLIFLFMFSSFPVGLLIYW).

It belongs to the OXA1/ALB3/YidC family. Type 1 subfamily. As to quaternary structure, interacts with the Sec translocase complex via SecD. Specifically interacts with transmembrane segments of nascent integral membrane proteins during membrane integration.

It is found in the cell inner membrane. Its function is as follows. Required for the insertion and/or proper folding and/or complex formation of integral membrane proteins into the membrane. Involved in integration of membrane proteins that insert both dependently and independently of the Sec translocase complex, as well as at least some lipoproteins. Aids folding of multispanning membrane proteins. The sequence is that of Membrane protein insertase YidC from Rickettsia akari (strain Hartford).